The following is a 358-amino-acid chain: MATH domain and coiled-coil domain-containing protein At3g58440 (358 aa).

The 124-residue stretch at 8-131 (QDKFTWVLEK…NDRLTIVAEV (124 aa)) folds into the MATH domain. Residues 250–309 (LRDAGFKVDWLEKKLDQLKEKKEEEMSGLARLHEIEERLQKLKLLFVDLESQLQKEKVEA) adopt a coiled-coil conformation.

This is MATH domain and coiled-coil domain-containing protein At3g58440 from Arabidopsis thaliana (Mouse-ear cress).